We begin with the raw amino-acid sequence, 583 residues long: Inactive carboxylesterase-like protein VdtD (583 aa).

A signal peptide spans 1 to 23; that stretch reads MFMTQIVFGIAPTLLKTFSHLTA. N-linked (GlcNAc...) asparagine glycans are attached at residues N84, N109, N221, N265, N307, N350, N388, N448, and N468.

It belongs to the type-B carboxylesterase/lipase family.

It participates in secondary metabolite biosynthesis. Functionally, inactive carboxylesterase-like protein; part of the gene cluster that mediates the biosynthesis of viriditoxin, one of the 'classical' secondary metabolites produced by fungi and that has antibacterial activity. The first step is performed by the polyketide synthase VdtA which condenses one acetyl-CoA and 6 malonyl-CoA units to form the heptaketide monomer backbone of viriditoxin. The product of VdtA is then O-methylated on C7 by the O-methyltransferase VdtC. The O-methyl group is important for the stereoselective coupling of the monomers at the final step of viriditoxin biosynthesis. The short-chain dehydrogenase/reductase VdtF then acts as a stereospecific reductase converting the pyrone to dihydropyrone via the reduction of the C3-C4 double bond. The FAD-binding monooxygenase VdtE then converts the ketone group into a methyl-ester group to yield semi-viriditoxin. Finally, the laccase VdtB is involved in dimerization of 2 semi-viriditoxin molecules to yield the final viriditoxin. VdtB is responsible for the regioselective 6,6'-coupling of semi-viriditoxin, which yields (M)-viriditoxin and (P)-viriditoxin at a ratio of 1:2. The non-catalytic carboxylesterase-like protein VdtD affects the stereochemistical outcome of the coupling. The highly reducing polyketide synthase VdtX is not involved in viriditoxin synthesis, but might possibly play a role in the production of additional metabolites not identified yet. In Byssochlamys spectabilis (Paecilomyces variotii), this protein is Inactive carboxylesterase-like protein VdtD.